Reading from the N-terminus, the 670-residue chain is Solute carrier organic anion transporter family member 1A4 (670 aa).

Over 1–20 the chain is Cytoplasmic; it reads MGKSEKEVATHGVRCFSKIK. The helical transmembrane segment at 21-40 threads the bilayer; that stretch reads AFLLALTCAYVSKSLSGTYM. The Extracellular portion of the chain corresponds to 41–59; it reads NSMLTQIERQFGIPTSVVG. A helical membrane pass occupies residues 60–80; that stretch reads LINGSFEIGNLLLIIFVSYFG. At 81 to 86 the chain is on the cytoplasmic side; that stretch reads TKLHRP. The chain crosses the membrane as a helical span at residues 87–111; sequence IMIGVGCAVMGLGCFLISIPHFLMG. Topologically, residues 112–155 are extracellular; sequence RYEYETTILPTSNLSSNSFVCTENRTQTLKPTQDPTECVKEMKS. Asparagine 124 and asparagine 135 each carry an N-linked (GlcNAc...) asparagine glycan. A helical transmembrane segment spans residues 156-184; that stretch reads LMWIYVLVGNIIRGMGETPIMPLGISYIE. The Cytoplasmic portion of the chain corresponds to 185–203; that stretch reads DFAKSENSPLYIGILETGM. A helical membrane pass occupies residues 204-224; the sequence is TIGPLIGLLLGSSCANIYVDT. The Extracellular portion of the chain corresponds to 225 to 242; sequence GSVNTDDLTITPTDTRWV. The helical transmembrane segment at 243-267 threads the bilayer; that stretch reads GAWWIGFLVCAGVNILTSIPFFFFP. Topologically, residues 268-311 are cytoplasmic; it reads KTLLKEGLQDNGDGTENAKEEKHREKIKEENRGITKDFFLFMKS. Residues 312-333 form a helical membrane-spanning segment; the sequence is LSCNPIYMIFILISVIQVNAFI. At 334 to 353 the chain is on the extracellular side; that stretch reads NSFTFMPKYLEQQYGKSTAE. Residues 354 to 377 traverse the membrane as a helical segment; that stretch reads IVFLMGLYMLPPICLGYLIGGLIM. At 378 to 381 the chain is on the cytoplasmic side; it reads KKFK. Residues 382–405 traverse the membrane as a helical segment; it reads ITVKKAAYIGFWLSLTEYLLSFVS. At 406–513 the chain is on the extracellular side; sequence YIMTCDNFPV…PECANKLQYF (108 aa). Positions 433 to 488 constitute a Kazal-like domain; the sequence is NNVLADCNTKCSCLTNTWDPVCGDNGLSYMSACLAGCEKSVGTGTNMVFQNCSCIQ. Cystine bridges form between cysteine 439-cysteine 469, cysteine 445-cysteine 465, and cysteine 454-cysteine 486. N-linked (GlcNAc...) asparagine glycans are attached at residues asparagine 483 and asparagine 492. The chain crosses the membrane as a helical span at residues 514 to 536; the sequence is LIISIIGCFIFSLGAIPGYMVLL. The Cytoplasmic portion of the chain corresponds to 537-545; the sequence is RCMKSEEKS. A helical transmembrane segment spans residues 546–571; it reads LGVGLHTFCMRILGGIPAPIYFGALI. Over 572–605 the chain is Extracellular; the sequence is DRTCLHWGTLKCGEPGACRMYDINSFRRIYLGLP. Residues 606–623 traverse the membrane as a helical segment; that stretch reads AALRGASFLPALFILILM. The Cytoplasmic portion of the chain corresponds to 624 to 670; that stretch reads RKFQFPGDIDSSDTDPAEMKLTAKESKCTNVHRSPTMQNDGERKTKL. Phosphoserine occurs at positions 634 and 635. The interval 649 to 670 is disordered; it reads SKCTNVHRSPTMQNDGERKTKL. Positions 651 to 662 are enriched in polar residues; it reads CTNVHRSPTMQN.

The protein belongs to the organo anion transporter (TC 2.A.60) family. In terms of tissue distribution, highly expressed in brain and liver. Detected at very low levels in heart and lung.

The protein localises to the cell membrane. It catalyses the reaction estrone 3-sulfate(out) = estrone 3-sulfate(in). The enzyme catalyses taurocholate(out) = taurocholate(in). It carries out the reaction prostaglandin E2(out) = prostaglandin E2(in). The catalysed reaction is L-thyroxine(out) = L-thyroxine(in). Its function is as follows. Mediates the Na(+)-independent transport of organic anions such as taurocholate, cholate, 17-beta-glucuronosyl estradiol, prostaglandin E2, estrone 3-sulfate, L-thyroxine (T4), the cardiac glycosides ouabain and digoxin and thyroid hormones. Shows a pH-sensitive substrate specificity which may be ascribed to the protonation state of the binding site and leads to a stimulation of substrate transport in an acidic microenvironment. Hydrogencarbonate/HCO3(-) acts as the probable counteranion that exchanges for organic anions. This Mus musculus (Mouse) protein is Solute carrier organic anion transporter family member 1A4 (Slco1a4).